Reading from the N-terminus, the 864-residue chain is Mitochondrial 15S rRNA processing factor CCM1 (864 aa).

The N-terminal 76 residues, 1 to 76 (MYMARCGPKN…REFSNTLKER (76 aa)), are a transit peptide targeting the mitochondrion. 2 PPR repeats span residues 319-353 (NKQN…STKH) and 356-390 (DICT…NIKP).

The protein belongs to the CCM1 family. In terms of assembly, binds to mitochondrial small subunit 15S rRNA.

The protein localises to the mitochondrion. In terms of biological role, regulates mitochondrial small subunit maturation by controlling 15S rRNA 5'-end processing. Localizes to the 5' precursor of the 15S rRNA in a position that is subsequently occupied by mS47 in the mature yeast mtSSU. Uses structure and sequence-specific RNA recognition, binding to a single-stranded region of the precursor and specifically recognizing bases -6 to -1. The exchange of Ccm1 for mS47 is coupled to the irreversible removal of precursor rRNA that is accompanied by conformational changes of the mitoribosomal proteins uS5m and mS26. These conformational changes signal completion of 5'-end rRNA processing through protection of the mature 5'-end of the 15S rRNA and stabilization of mS47. The removal of the 5' precursor together with the dissociation of Ccm1 may be catalyzed by the 5'-3' exoribonuclease Pet127. Involved in the specific removal of group I introns in mitochondrial encoded transcripts. This is Mitochondrial 15S rRNA processing factor CCM1 (CCM1) from Saccharomyces cerevisiae (strain RM11-1a) (Baker's yeast).